A 132-amino-acid chain; its full sequence is uncharacterized protein (132 aa).

Helical transmembrane passes span 7–29, 44–62, 69–88, and 108–130; these read LALLSFFLGLGSFFSFYVAPTLF, VFPVYFGLGIILVGISLFL, LFLSLGILNLLLLLLQEFIV, and GVSMGINLAILLLTLGKVLILIF.

The protein resides in the cell membrane. This is an uncharacterized protein from Aquifex aeolicus (strain VF5).